Consider the following 471-residue polypeptide: Adenosylhomocysteinase (471 aa).

Thr60, Asp135, and Glu196 together coordinate substrate. 197 to 199 (TTT) provides a ligand contact to NAD(+). Residues Lys226 and Asp230 each coordinate substrate. Residues Asn231, 260-265 (GYGDVG), Glu283, Asn318, 339-341 (IGH), and Asn387 each bind NAD(+).

It belongs to the adenosylhomocysteinase family. It depends on NAD(+) as a cofactor.

The protein localises to the cytoplasm. It catalyses the reaction S-adenosyl-L-homocysteine + H2O = L-homocysteine + adenosine. Its pathway is amino-acid biosynthesis; L-homocysteine biosynthesis; L-homocysteine from S-adenosyl-L-homocysteine: step 1/1. Functionally, may play a key role in the regulation of the intracellular concentration of adenosylhomocysteine. In Chlorobaculum parvum (strain DSM 263 / NCIMB 8327) (Chlorobium vibrioforme subsp. thiosulfatophilum), this protein is Adenosylhomocysteinase.